We begin with the raw amino-acid sequence, 149 residues long: Cytochrome c-type biogenesis protein CcmE (149 aa).

At 1-8 the chain is on the cytoplasmic side; that stretch reads MNPKRKQR. The helical; Signal-anchor for type II membrane protein transmembrane segment at 9–29 threads the bilayer; the sequence is LIIVSFLVIGVSATVGLIMAA. Over 30-149 the chain is Periplasmic; sequence LSSNVNHFYN…AQDAAPAQTY (120 aa). Heme-binding residues include His-124 and Tyr-128.

The protein belongs to the CcmE/CycJ family.

The protein resides in the cell inner membrane. Functionally, heme chaperone required for the biogenesis of c-type cytochromes. Transiently binds heme delivered by CcmC and transfers the heme to apo-cytochromes in a process facilitated by CcmF and CcmH. This Hahella chejuensis (strain KCTC 2396) protein is Cytochrome c-type biogenesis protein CcmE.